Reading from the N-terminus, the 130-residue chain is Small ribosomal subunit protein uS9 (130 aa).

Positions 104-130 (LTRDPRMKERKKYGLKKARRAPQFSKR) are disordered. Residues 111-130 (KERKKYGLKKARRAPQFSKR) are compositionally biased toward basic residues.

It belongs to the universal ribosomal protein uS9 family.

The sequence is that of Small ribosomal subunit protein uS9 from Ruminiclostridium cellulolyticum (strain ATCC 35319 / DSM 5812 / JCM 6584 / H10) (Clostridium cellulolyticum).